Here is a 592-residue protein sequence, read N- to C-terminus: MAENNNNNNNNNNNNVSTPPHQKPHLTTGLRTSSSGLLMDKRRQDEEKFSAEQVAMGKKSPTKLFSAYSLNDLSNPPTDEELNNYKDLPASSLPPIHKREKLRRVFVNRDIKLDRIEFFGFDMDYTLAVYNSPDFEELAYDMVLDKLIDIGYPKSIRKLKYDPNFPTRGLFLDRELGNLLKIDSFGNIIICVHGRTTLSKNRTAEFYPSMRVSSDEIARNRFYLLNTLFTLPEACLYADLVDHLERESGLRLTEEVADEQQQMNSPPLSSLGSESVRIDESNHQPEGDLSFSNLFQDVRTACDLVHNDGSLKTRVLDDLPRYIRKTPDMPVFFDRLRQNKNKVFLLTNSEFYYTNKVMSYMMNGYNPNYQSWRDYFDVIIVGADKPRFFSEGTTIREVDTETGNLRITNVKDRFEQGKVYHGGSLSLFQKLTGAKGSRVLYIGDHIFADIIKSKKTHGWRNLLVVPELQHELEVMNQQKDTTIHLMNLEFIRAEIYRGLDSESTTPPDIEVLHQHLKNTNDKLNFAYNKYFGSLFKNGSKSTFFSMQVQRYADLYTSDYLNLLNYPLFYHFCANSLPLPHESSSFSSFDTSN.

A compositionally biased stretch (low complexity) spans 1 to 15 (MAENNNNNNNNNNNN). The interval 1–37 (MAENNNNNNNNNNNNVSTPPHQKPHLTTGLRTSSSGL) is disordered. Catalysis depends on D122, which acts as the Nucleophile. IMP is bound by residues D122 and D124. Positions 122 and 124 each coordinate Mg(2+). The Proton donor role is filled by D124. Position 226 (N226) interacts with ATP. The segment at 252–273 (LTEEVADEQQQMNSPPLSSLGS) is disordered. Residues 259–273 (EQQQMNSPPLSSLGS) show a composition bias toward polar residues. IMP-binding residues include R299, D303, K312, T347, N348, S349, and K385. Position 444 (D444) interacts with Mg(2+). 2 residues coordinate ATP: Q547 and R550.

The protein belongs to the 5'(3')-deoxyribonucleotidase family. Homotetramer. The cofactor is Mg(2+).

The protein localises to the cytoplasm. It localises to the cytosol. It catalyses the reaction a ribonucleoside 5'-phosphate + H2O = a ribonucleoside + phosphate. It carries out the reaction a 2'-deoxyribonucleoside + a ribonucleoside 5'-phosphate = a ribonucleoside + a 2'-deoxyribonucleoside 5'-phosphate. In terms of biological role, broad specificity cytosolic 5'-nucleotidase that catalyzes the dephosphorylation of 6-hydroxypurine nucleoside 5'-monophosphates. In addition, possesses a phosphotransferase activity by which it can transfer a phosphate from a donor nucleoside monophosphate to an acceptor nucleoside. Through these activities regulates the purine nucleoside/nucleotide pools within the cell. In Dictyostelium discoideum (Social amoeba), this protein is Cytosolic purine 5'-nucleotidase (nt5c2).